We begin with the raw amino-acid sequence, 1144 residues long: Alpha-mannosidase 2 (1144 aa).

At 1 to 5 the chain is on the cytoplasmic side; it reads MKLSR. Residues 6-26 form a helical; Signal-anchor for type II membrane protein membrane-spanning segment; sequence QFTVFGSAIFCVVIFSLYLML. Topologically, residues 27 to 1144 are lumenal; that stretch reads DRGHLDYPRN…EISTFRIQLR (1118 aa). Asn-78 is a glycosylation site (N-linked (GlcNAc...) asparagine). Phosphoserine is present on residues Ser-80 and Ser-82. Residue Asn-93 is glycosylated (N-linked (GlcNAc...) asparagine). Zn(2+) contacts are provided by His-175, Asp-177, Asp-289, and His-569. Asp-289 functions as the Nucleophile in the catalytic mechanism. Asn-1125 carries N-linked (GlcNAc...) asparagine glycosylation.

This sequence belongs to the glycosyl hydrolase 38 family. In terms of assembly, homodimer; disulfide-linked. Zn(2+) serves as cofactor. Post-translationally, glycosylated.

The protein resides in the golgi apparatus membrane. The catalysed reaction is N(4)-{beta-D-GlcNAc-(1-&gt;2)-alpha-D-Man-(1-&gt;3)-[alpha-D-Man-(1-&gt;3)-[alpha-D-Man-(1-&gt;6)]-alpha-D-Man-(1-&gt;6)]-beta-D-Man-(1-&gt;4)-beta-D-GlcNAc-(1-&gt;4)-beta-D-GlcNAc}-L-asparaginyl-[protein] + 2 H2O = 2 alpha-D-mannopyranose + an N(4)-{beta-D-GlcNAc-(1-&gt;2)-alpha-D-Man-(1-&gt;3)-[alpha-D-Man-(1-&gt;6)]-beta-D-Man-(1-&gt;4)-beta-D-GlcNAc-(1-&gt;4)-beta-D-GlcNAc}-L-asparaginyl-[protein]. It functions in the pathway protein modification; protein glycosylation. Catalyzes the first committed step in the biosynthesis of complex N-glycans. It controls conversion of high mannose to complex N-glycans; the final hydrolytic step in the N-glycan maturation pathway. The protein is Alpha-mannosidase 2 (MAN2A1) of Homo sapiens (Human).